The chain runs to 321 residues: Lipoyl synthase (321 aa).

Residues Cys68, Cys73, Cys79, Cys94, Cys98, Cys101, and Ser308 each coordinate [4Fe-4S] cluster. The Radical SAM core domain maps to 80 to 297 (FNHGTATFMI…KEIALELGFT (218 aa)).

Belongs to the radical SAM superfamily. Lipoyl synthase family. [4Fe-4S] cluster serves as cofactor.

The protein resides in the cytoplasm. The catalysed reaction is [[Fe-S] cluster scaffold protein carrying a second [4Fe-4S](2+) cluster] + N(6)-octanoyl-L-lysyl-[protein] + 2 oxidized [2Fe-2S]-[ferredoxin] + 2 S-adenosyl-L-methionine + 4 H(+) = [[Fe-S] cluster scaffold protein] + N(6)-[(R)-dihydrolipoyl]-L-lysyl-[protein] + 4 Fe(3+) + 2 hydrogen sulfide + 2 5'-deoxyadenosine + 2 L-methionine + 2 reduced [2Fe-2S]-[ferredoxin]. It functions in the pathway protein modification; protein lipoylation via endogenous pathway; protein N(6)-(lipoyl)lysine from octanoyl-[acyl-carrier-protein]: step 2/2. Its function is as follows. Catalyzes the radical-mediated insertion of two sulfur atoms into the C-6 and C-8 positions of the octanoyl moiety bound to the lipoyl domains of lipoate-dependent enzymes, thereby converting the octanoylated domains into lipoylated derivatives. The polypeptide is Lipoyl synthase (Aliivibrio fischeri (strain ATCC 700601 / ES114) (Vibrio fischeri)).